Reading from the N-terminus, the 628-residue chain is 1-deoxy-D-xylulose-5-phosphate synthase (628 aa).

Residues H72 and 113–115 each bind thiamine diphosphate; that span reads GHS. Mg(2+) is bound at residue D144. Thiamine diphosphate is bound by residues 145–146, N173, Y284, and E366; that span reads GA. N173 is a Mg(2+) binding site.

The protein belongs to the transketolase family. DXPS subfamily. In terms of assembly, homodimer. The cofactor is Mg(2+). It depends on thiamine diphosphate as a cofactor.

It carries out the reaction D-glyceraldehyde 3-phosphate + pyruvate + H(+) = 1-deoxy-D-xylulose 5-phosphate + CO2. It functions in the pathway metabolic intermediate biosynthesis; 1-deoxy-D-xylulose 5-phosphate biosynthesis; 1-deoxy-D-xylulose 5-phosphate from D-glyceraldehyde 3-phosphate and pyruvate: step 1/1. In terms of biological role, catalyzes the acyloin condensation reaction between C atoms 2 and 3 of pyruvate and glyceraldehyde 3-phosphate to yield 1-deoxy-D-xylulose-5-phosphate (DXP). The polypeptide is 1-deoxy-D-xylulose-5-phosphate synthase (Shouchella clausii (strain KSM-K16) (Alkalihalobacillus clausii)).